The following is a 355-amino-acid chain: Mitogen-activated protein kinase (355 aa).

Residues 23-311 enclose the Protein kinase domain; the sequence is YDIQDVVGEG…VEEALKHPYL (289 aa). Residues 29 to 37 and Lys-52 contribute to the ATP site; that span reads VGEGAYGVV. Asp-147 serves as the catalytic Proton acceptor. Thr-183 bears the Phosphothreonine mark. The short motif at 183 to 185 is the TXY element; it reads TEY. Tyr-185 is modified (phosphotyrosine).

This sequence belongs to the protein kinase superfamily. CMGC Ser/Thr protein kinase family. MAP kinase subfamily. Dually phosphorylated on Thr-183 and Tyr-185, which activates the enzyme.

It localises to the nucleus. The enzyme catalyses L-seryl-[protein] + ATP = O-phospho-L-seryl-[protein] + ADP + H(+). It catalyses the reaction L-threonyl-[protein] + ATP = O-phospho-L-threonyl-[protein] + ADP + H(+). With respect to regulation, activated by tyrosine and threonine phosphorylation. Functionally, responds to activation by environmental stress by phosphorylating downstream targets. The polypeptide is Mitogen-activated protein kinase (MAPK) (Fusarium vanettenii (Neocosmospora pisi)).